An 813-amino-acid polypeptide reads, in one-letter code: Disintegrin and metalloproteinase domain-containing protein 33 (813 aa).

The N-terminal stretch at 1–29 (MGWRPRRARGTPLLLLLLLLLLWPVPGAG) is a signal peptide. Positions 30–203 (VLQGHIPGQP…PGGPQSRGRR (174 aa)) are excised as a propeptide. The Extracellular portion of the chain corresponds to 30–701 (VLQGHIPGQP…GPVQAENHDT (672 aa)). A glycan (N-linked (GlcNAc...) asparagine) is linked at N109. The short motif at 131–138 (CTCSGMSG) is the Cysteine switch element. C133 provides a ligand contact to Zn(2+). N-linked (GlcNAc...) asparagine glycosylation is present at N145. Residues 184-205 (PGNKAGMTSLPGGPQSRGRREA) are disordered. One can recognise a Peptidase M12B domain in the interval 210–409 (KYLELYIVAD…GGGACLSNAP (200 aa)). N231 and N276 each carry an N-linked (GlcNAc...) asparagine glycan. Cystine bridges form between C320-C404, C360-C388, and C361-C371. H345 is a Zn(2+) binding site. E346 is a catalytic residue. Positions 349 and 355 each coordinate Zn(2+). Residues 417–503 (PALCGNGFVE…HCPPDVYLLD (87 aa)) enclose the Disintegrin domain. N448 carries an N-linked (GlcNAc...) asparagine glycan. 4 disulfides stabilise this stretch: C475–C495, C653–C663, C657–C669, and C671–C680. One can recognise an EGF-like domain in the interval 649-681 (ELQRCLTACHSHGVCNSNHNCHCAPGWAPPFCD). Residues 702–722 (FLLAMLLSVLLPLLPGAGLAW) form a helical membrane-spanning segment. The Cytoplasmic segment spans residues 723–813 (CCYRLPGAHL…QVQMPRSCLW (91 aa)). A disordered region spans residues 746–813 (SGPKDGPHRD…QVQMPRSCLW (68 aa)). A compositionally biased stretch (basic and acidic residues) spans 780–791 (ENSHEPSSHPEK).

The cofactor is Zn(2+). Post-translationally, the precursor is cleaved by a furin endopeptidase. As to expression, expressed in all tissues, except liver, with high expression in placenta, lung, spleen and veins.

The protein resides in the membrane. This chain is Disintegrin and metalloproteinase domain-containing protein 33 (ADAM33), found in Homo sapiens (Human).